A 375-amino-acid chain; its full sequence is Alcohol dehydrogenase 1A (375 aa).

S2 is modified (N-acetylserine). The residue at position 23 (S23) is a Phosphoserine. A Phosphotyrosine modification is found at Y35. C47 provides a ligand contact to Zn(2+). G48–H52 serves as a coordination point for NAD(+). 6 residues coordinate Zn(2+): H68, C98, C101, C104, C112, and C175. Residues G200 to G205, D224, K229, I270, V293 to V295, A318 to Y320, and R370 contribute to the NAD(+) site.

This sequence belongs to the zinc-containing alcohol dehydrogenase family. In terms of assembly, dimer of identical or heterodimer of closely related subunits alpha, beta, or gamma that are encoded by genes ADH1A, ADH1B, and ADH1C, respectively. Zn(2+) serves as cofactor.

It localises to the cytoplasm. The enzyme catalyses a primary alcohol + NAD(+) = an aldehyde + NADH + H(+). The catalysed reaction is a secondary alcohol + NAD(+) = a ketone + NADH + H(+). It catalyses the reaction butan-1-ol + NAD(+) = butanal + NADH + H(+). It carries out the reaction 1-propanol + NAD(+) = propanal + NADH + H(+). The enzyme catalyses propan-2-ol + NAD(+) = acetone + NADH + H(+). Functionally, alcohol dehydrogenase. Oxidizes primary as well as secondary alcohols. Ethanol is a very poor substrate. The sequence is that of Alcohol dehydrogenase 1A (ADH1A) from Macaca mulatta (Rhesus macaque).